The following is a 152-amino-acid chain: Nucleoside diphosphate kinase B (152 aa).

Residues 1 to 66 (MANLERTFIA…DRPFFPGLVK (66 aa)) are interaction with AKAP13. Residues lysine 12, phenylalanine 60, arginine 88, threonine 94, arginine 105, and asparagine 115 each contribute to the ATP site. The active-site Pros-phosphohistidine intermediate is histidine 118.

The protein belongs to the NDK family. As to quaternary structure, hexamer of two different chains: An and B (A6, A5B, A4B2, A3B3, A2B4, AB5, B6). Interacts with CAPN8. Interacts with AKAP13. Interacts with ITGB1BP1 (via C-terminal domain region). Interacts with BCL2L10. Mg(2+) is required as a cofactor. Post-translationally, the N-terminus is blocked.

Its subcellular location is the cytoplasm. It localises to the cell projection. The protein localises to the lamellipodium. The protein resides in the ruffle. It is found in the nucleus. The enzyme catalyses a 2'-deoxyribonucleoside 5'-diphosphate + ATP = a 2'-deoxyribonucleoside 5'-triphosphate + ADP. It catalyses the reaction a ribonucleoside 5'-diphosphate + ATP = a ribonucleoside 5'-triphosphate + ADP. It carries out the reaction ATP + protein L-histidine = ADP + protein N-phospho-L-histidine.. Major role in the synthesis of nucleoside triphosphates other than ATP. The ATP gamma phosphate is transferred to the NDP beta phosphate via a ping-pong mechanism, using a phosphorylated active-site intermediate. Negatively regulates Rho activity by interacting with AKAP13/LBC. Acts as a transcriptional activator of the MYC gene; binds DNA non-specifically. Binds to both single-stranded guanine- and cytosine-rich strands within the nuclease hypersensitive element (NHE) III(1) region of the MYC gene promoter. Does not bind to duplex NHE III(1). Has G-quadruplex (G4) DNA-binding activity, which is independent of its nucleotide-binding and kinase activity. Binds both folded and unfolded G4 with similar low nanomolar affinities. Stabilizes folded G4s regardless of whether they are prefolded or not. Exhibits histidine protein kinase activity. This chain is Nucleoside diphosphate kinase B (Nme2), found in Rattus norvegicus (Rat).